Here is a 94-residue protein sequence, read N- to C-terminus: Co-chaperonin GroES (94 aa).

Belongs to the GroES chaperonin family. Heptamer of 7 subunits arranged in a ring. Interacts with the chaperonin GroEL.

Its subcellular location is the cytoplasm. Functionally, together with the chaperonin GroEL, plays an essential role in assisting protein folding. The GroEL-GroES system forms a nano-cage that allows encapsulation of the non-native substrate proteins and provides a physical environment optimized to promote and accelerate protein folding. GroES binds to the apical surface of the GroEL ring, thereby capping the opening of the GroEL channel. The protein is Co-chaperonin GroES of Lactobacillus acidophilus (strain ATCC 700396 / NCK56 / N2 / NCFM).